The sequence spans 311 residues: Putative protease MJ0651 (311 aa).

Serine 128 (nucleophile) is an active-site residue. Residue lysine 180 is the Proton donor/acceptor of the active site.

Belongs to the peptidase S49 family.

The polypeptide is Putative protease MJ0651 (Methanocaldococcus jannaschii (strain ATCC 43067 / DSM 2661 / JAL-1 / JCM 10045 / NBRC 100440) (Methanococcus jannaschii)).